A 244-amino-acid polypeptide reads, in one-letter code: 23S rRNA (guanosine-2'-O-)-methyltransferase RlmB (244 aa).

Residues Gly-196, Ile-216, and Leu-225 each coordinate S-adenosyl-L-methionine.

Belongs to the class IV-like SAM-binding methyltransferase superfamily. RNA methyltransferase TrmH family. RlmB subfamily. As to quaternary structure, homodimer.

The protein localises to the cytoplasm. The enzyme catalyses guanosine(2251) in 23S rRNA + S-adenosyl-L-methionine = 2'-O-methylguanosine(2251) in 23S rRNA + S-adenosyl-L-homocysteine + H(+). Functionally, specifically methylates the ribose of guanosine 2251 in 23S rRNA. The chain is 23S rRNA (guanosine-2'-O-)-methyltransferase RlmB from Photorhabdus laumondii subsp. laumondii (strain DSM 15139 / CIP 105565 / TT01) (Photorhabdus luminescens subsp. laumondii).